Reading from the N-terminus, the 238-residue chain is Urease subunit alpha (238 aa).

The segment at 1-102 (MKLTPKELDK…LVTVHTPIES (102 aa)) is urease gamma. The interval 103-238 (KGKLVPGELF…DDNYVKTIKE (136 aa)) is urease beta.

In the N-terminal section; belongs to the urease gamma subunit family. The protein in the C-terminal section; belongs to the urease beta subunit family. In terms of assembly, heterohexamer of 3 UreA (alpha) and 3 UreB (beta) subunits.

The protein localises to the cytoplasm. The catalysed reaction is urea + 2 H2O + H(+) = hydrogencarbonate + 2 NH4(+). The protein operates within nitrogen metabolism; urea degradation; CO(2) and NH(3) from urea (urease route): step 1/1. The protein is Urease subunit alpha of Helicobacter acinonychis (strain Sheeba).